The following is a 422-amino-acid chain: UPF0761 membrane protein LHK_02978 (422 aa).

The next 6 membrane-spanning stretches (helical) occupy residues leucine 44 to phenylalanine 64, leucine 102 to aspartate 122, methionine 141 to glycine 161, leucine 178 to leucine 198, alanine 212 to leucine 232, and alanine 246 to isoleucine 266.

This sequence belongs to the UPF0761 family.

It is found in the cell inner membrane. This chain is UPF0761 membrane protein LHK_02978, found in Laribacter hongkongensis (strain HLHK9).